We begin with the raw amino-acid sequence, 113 residues long: Probable UPF0122 protein (113 aa).

The protein belongs to the UPF0122 family.

Functionally, might take part in the signal recognition particle (SRP) pathway. This is inferred from the conservation of its genetic proximity to ftsY/ffh. May be a regulatory protein. The sequence is that of Probable UPF0122 protein from Mycoplasma mycoides.